The primary structure comprises 123 residues: Large ribosomal subunit protein bL21 (123 aa).

It belongs to the bacterial ribosomal protein bL21 family. Part of the 50S ribosomal subunit. Contacts protein L20.

Functionally, this protein binds to 23S rRNA in the presence of protein L20. The protein is Large ribosomal subunit protein bL21 of Rhizobium meliloti (strain 1021) (Ensifer meliloti).